A 289-amino-acid polypeptide reads, in one-letter code: Acetyl-coenzyme A carboxylase carboxyl transferase subunit beta (289 aa).

The region spanning 23–289 (HWIKCPSCSA…YDENPCLLHL (267 aa)) is the CoA carboxyltransferase N-terminal domain. The Zn(2+) site is built by Cys27, Cys30, Cys46, and Cys49. Residues 27 to 49 (CPSCSALMYYKEVIAQHHVCPKC) form a C4-type zinc finger.

The protein belongs to the AccD/PCCB family. Acetyl-CoA carboxylase is a heterohexamer composed of biotin carboxyl carrier protein (AccB), biotin carboxylase (AccC) and two subunits each of ACCase subunit alpha (AccA) and ACCase subunit beta (AccD). Requires Zn(2+) as cofactor.

The protein localises to the cytoplasm. The catalysed reaction is N(6)-carboxybiotinyl-L-lysyl-[protein] + acetyl-CoA = N(6)-biotinyl-L-lysyl-[protein] + malonyl-CoA. The protein operates within lipid metabolism; malonyl-CoA biosynthesis; malonyl-CoA from acetyl-CoA: step 1/1. Its function is as follows. Component of the acetyl coenzyme A carboxylase (ACC) complex. Biotin carboxylase (BC) catalyzes the carboxylation of biotin on its carrier protein (BCCP) and then the CO(2) group is transferred by the transcarboxylase to acetyl-CoA to form malonyl-CoA. In Wolinella succinogenes (strain ATCC 29543 / DSM 1740 / CCUG 13145 / JCM 31913 / LMG 7466 / NCTC 11488 / FDC 602W) (Vibrio succinogenes), this protein is Acetyl-coenzyme A carboxylase carboxyl transferase subunit beta.